The sequence spans 339 residues: MRSYRFSDYLHMSVSFSNDMDLFCGEDSGVFSGESTVDFSSSEVDSWPGDSIACFIEDERHFVPGHDYLSRFQTRSLDASAREDSVAWILKVQAYYNFQPLTAYLAVNYMDRFLYARRLPETSGWPMQLLAVACLSLAAKMEEILVPSLFDFQVAGVKYLFEAKTIKRMELLVLSVLDWRLRSVTPFDFISFFAYKIDPSGTFLGFFISHATEIILSNIKEASFLEYWPSSIAAAAILCVANELPSLSSVVNPHESPETWCDGLSKEKIVRCYRLMKAMAIENNRLNTPKVIAKLRVSVRASSTLTRPSDESSFSSSSPCKRRKLSGYSWVGDETSTSN.

This sequence belongs to the cyclin family. Cyclin D subfamily. In terms of assembly, interacts with CDKA-1 and KRP6/ICK4. In terms of tissue distribution, expressed in roots, leaves and flowers.

Its function is as follows. May activate cell cycle in the root apical meristem (RAM) and promote embryonic root (radicle) protrusion. The sequence is that of Cyclin-D1-1 (CYCD1-1) from Arabidopsis thaliana (Mouse-ear cress).